A 938-amino-acid chain; its full sequence is Bifunctional uridylyltransferase/uridylyl-removing enzyme (938 aa).

The interval Met1–Leu379 is uridylyltransferase. Positions Asp380–Ala733 are uridylyl-removing. The HD domain occupies Val495–Leu617. ACT domains are found at residues Glu734 to Arg813 and Val845 to Ala924.

This sequence belongs to the GlnD family. The cofactor is Mg(2+).

It carries out the reaction [protein-PII]-L-tyrosine + UTP = [protein-PII]-uridylyl-L-tyrosine + diphosphate. The enzyme catalyses [protein-PII]-uridylyl-L-tyrosine + H2O = [protein-PII]-L-tyrosine + UMP + H(+). Uridylyltransferase (UTase) activity is inhibited by glutamine, while glutamine activates uridylyl-removing (UR) activity. In terms of biological role, modifies, by uridylylation and deuridylylation, the PII regulatory proteins (GlnB and homologs), in response to the nitrogen status of the cell that GlnD senses through the glutamine level. Under low glutamine levels, catalyzes the conversion of the PII proteins and UTP to PII-UMP and PPi, while under higher glutamine levels, GlnD hydrolyzes PII-UMP to PII and UMP (deuridylylation). Thus, controls uridylylation state and activity of the PII proteins, and plays an important role in the regulation of nitrogen assimilation and metabolism. This chain is Bifunctional uridylyltransferase/uridylyl-removing enzyme, found in Phenylobacterium zucineum (strain HLK1).